The primary structure comprises 329 residues: Fructose-1,6-bisphosphatase class 1 (329 aa).

Positions 84, 103, 105, and 106 each coordinate Mg(2+). Substrate contacts are provided by residues 106 to 109 (DGSS), Asn-196, and Lys-262. A Mg(2+)-binding site is contributed by Glu-268.

It belongs to the FBPase class 1 family. As to quaternary structure, homotetramer. Mg(2+) is required as a cofactor.

Its subcellular location is the cytoplasm. The enzyme catalyses beta-D-fructose 1,6-bisphosphate + H2O = beta-D-fructose 6-phosphate + phosphate. It functions in the pathway carbohydrate biosynthesis; gluconeogenesis. This chain is Fructose-1,6-bisphosphatase class 1, found in Shewanella pealeana (strain ATCC 700345 / ANG-SQ1).